The sequence spans 376 residues: Fibromodulin (376 aa).

The signal sequence occupies residues 1–18; the sequence is MQWTSLLLLAGLFSLSQA. Gln19 carries the pyrrolidone carboxylic acid modification. Tyr20, Tyr38, Tyr39, Tyr45, Tyr47, Tyr53, and Tyr55 each carry sulfotyrosine. Residues 67-105 form the LRRNT domain; that stretch reads SPSPPDPRDCPQECDCPPNFPTAMYCDNRNLKYLPFVPS. 8 LRR repeats span residues 106–127, 130–151, 156–176, 177–198, 201–222, 224–245, 246–266, and 269–289; these read RMKYVYFQNNQITSIQEGVFDN, GLLWIALHGNQITSDKVGRKVF, HLERLYLDHNNLTRMPGPLPR, SLRELHLDHNQISRVPNNALEG, NLTALYLQHNEIQEVGSSMRGL, SLILLDLSYNHLRKVPDGLPSA, LEQLYMEHNNVYTVPDSYFRG, and KLLYVRLSHNSLTNNGLASNT. An N-linked (GlcNAc...) (keratan sulfate) asparagine glycan is attached at Asn127. N-linked (GlcNAc...) (keratan sulfate) asparagine glycosylation is present at Asn166. A glycan (N-linked (GlcNAc...) (keratan sulfate) asparagine) is linked at Asn201. Asn291 carries N-linked (GlcNAc...) (keratan sulfate) asparagine glycosylation. 2 LRR repeats span residues 294–315 and 316–335; these read SLLELDLSYNQLQKIPPVNTNL and ENLYLQGNRINEFSISSFCT. Residues Cys334 and Cys367 are joined by a disulfide bond. The N-linked (GlcNAc...) asparagine glycan is linked to Asn341. One copy of the LRR 11 repeat lies at 344–365; it reads KLQVLRLDGNEIKRSAMPADAP.

It belongs to the small leucine-rich proteoglycan (SLRP) family. SLRP class II subfamily. Binds to type I and type II collagen. Binds keratan sulfate chains.

Its subcellular location is the secreted. It localises to the extracellular space. The protein localises to the extracellular matrix. Its function is as follows. Affects the rate of fibrils formation. May have a primary role in collagen fibrillogenesis. The chain is Fibromodulin (FMOD) from Homo sapiens (Human).